The following is a 180-amino-acid chain: Flavodoxin B (180 aa).

The region spanning 4–173 (IGLFFGSNTG…RVAAWLAQIA (170 aa)) is the Flavodoxin-like domain.

This sequence belongs to the flavodoxin family. FMN is required as a cofactor.

Functionally, low-potential electron donor to a number of redox enzymes. NifF is the electron donor to nitrogenase. The chain is Flavodoxin B (nifF) from Azotobacter chroococcum mcd 1.